The sequence spans 208 residues: Large ribosomal subunit protein uL4 (208 aa).

The segment at 42-77 (SMRQGTHKTKTKTEVSGGGRKPWRQKGTGRARQGSI) is disordered.

It belongs to the universal ribosomal protein uL4 family. As to quaternary structure, part of the 50S ribosomal subunit.

In terms of biological role, one of the primary rRNA binding proteins, this protein initially binds near the 5'-end of the 23S rRNA. It is important during the early stages of 50S assembly. It makes multiple contacts with different domains of the 23S rRNA in the assembled 50S subunit and ribosome. Functionally, forms part of the polypeptide exit tunnel. The polypeptide is Large ribosomal subunit protein uL4 (Spiroplasma kunkelii).